We begin with the raw amino-acid sequence, 44 residues long: Photosystem II reaction center protein K (44 aa).

A propeptide spanning residues 1–7 is cleaved from the precursor; the sequence is METLLLS. Residues 23 to 43 traverse the membrane as a helical segment; that stretch reads LPIIPVFFLLLAFVWQAAIGF.

It belongs to the PsbK family. In terms of assembly, PSII is composed of 1 copy each of membrane proteins PsbA, PsbB, PsbC, PsbD, PsbE, PsbF, PsbH, PsbI, PsbJ, PsbK, PsbL, PsbM, PsbT, PsbX, PsbY, PsbZ, Psb30/Ycf12, at least 3 peripheral proteins of the oxygen-evolving complex and a large number of cofactors. It forms dimeric complexes.

Its subcellular location is the plastid. It localises to the chloroplast thylakoid membrane. In terms of biological role, one of the components of the core complex of photosystem II (PSII). PSII is a light-driven water:plastoquinone oxidoreductase that uses light energy to abstract electrons from H(2)O, generating O(2) and a proton gradient subsequently used for ATP formation. It consists of a core antenna complex that captures photons, and an electron transfer chain that converts photonic excitation into a charge separation. The protein is Photosystem II reaction center protein K of Phaeodactylum tricornutum (strain CCAP 1055/1).